Reading from the N-terminus, the 325-residue chain is Neural proliferation differentiation and control protein 1 (325 aa).

The signal sequence occupies residues 1 to 34; sequence MATPLPPPSPRHLRLLRLLLSGLVLGAALRGAAA. Positions 138 to 175 are disordered; the sequence is QGLELGLPSTPGTPTPTPHTSLGSPVSSDPVHMSPLEP. A helical transmembrane segment spans residues 182 to 202; sequence GLALVLILAFCVAGAAALSVA. Ser229 bears the Phosphoserine mark. A disordered region spans residues 266–290; sequence EPPKELDTASSDEENEDGDFTVYEC. Positions 275–284 are enriched in acidic residues; the sequence is SSDEENEDGD.

This sequence belongs to the NPDC1/cab-1 family. Strongly expressed in adult brain; especially in hippocampus, frontal lobe and temporal lobe.

It localises to the membrane. Functionally, suppresses oncogenic transformation in neural and non-neural cells and down-regulates neural cell proliferation. Might be involved in transcriptional regulation. This is Neural proliferation differentiation and control protein 1 (NPDC1) from Homo sapiens (Human).